Here is a 178-residue protein sequence, read N- to C-terminus: Large ribosomal subunit protein uL6 (178 aa).

It belongs to the universal ribosomal protein uL6 family. As to quaternary structure, part of the 50S ribosomal subunit.

Its function is as follows. This protein binds to the 23S rRNA, and is important in its secondary structure. It is located near the subunit interface in the base of the L7/L12 stalk, and near the tRNA binding site of the peptidyltransferase center. The polypeptide is Large ribosomal subunit protein uL6 (Helicobacter hepaticus (strain ATCC 51449 / 3B1)).